The primary structure comprises 163 residues: Globin CTT-V (163 aa).

The N-terminal stretch at 1 to 16 (MKFFAVLTLCIIGAIA) is a signal peptide. Residues 18-163 (PLTSDEANLV…YTVAFEVIPA (146 aa)) enclose the Globin domain. Residues H76 and H111 each coordinate heme b.

This sequence belongs to the globin family.

The polypeptide is Globin CTT-V (CTT-V) (Chironomus thummi piger (Midge)).